The chain runs to 409 residues: Tyrosine--tRNA ligase (409 aa).

The 'HIGH' region signature appears at 43–52; it reads PTAPDLHLGH. Residues 227-231 carry the 'KMSKS' region motif; sequence KMSKS. Residue lysine 230 coordinates ATP. Positions 338 to 399 constitute an S4 RNA-binding domain; that stretch reads LALPQLLKLA…GKRKFAKVTL (62 aa).

The protein belongs to the class-I aminoacyl-tRNA synthetase family. TyrS type 2 subfamily. As to quaternary structure, homodimer.

It is found in the cytoplasm. It catalyses the reaction tRNA(Tyr) + L-tyrosine + ATP = L-tyrosyl-tRNA(Tyr) + AMP + diphosphate + H(+). Its function is as follows. Catalyzes the attachment of tyrosine to tRNA(Tyr) in a two-step reaction: tyrosine is first activated by ATP to form Tyr-AMP and then transferred to the acceptor end of tRNA(Tyr). In Nitrosomonas europaea (strain ATCC 19718 / CIP 103999 / KCTC 2705 / NBRC 14298), this protein is Tyrosine--tRNA ligase.